The chain runs to 220 residues: ATP phosphoribosyltransferase (220 aa).

The protein belongs to the ATP phosphoribosyltransferase family. Short subfamily. Heteromultimer composed of HisG and HisZ subunits.

The protein resides in the cytoplasm. It catalyses the reaction 1-(5-phospho-beta-D-ribosyl)-ATP + diphosphate = 5-phospho-alpha-D-ribose 1-diphosphate + ATP. The protein operates within amino-acid biosynthesis; L-histidine biosynthesis; L-histidine from 5-phospho-alpha-D-ribose 1-diphosphate: step 1/9. Catalyzes the condensation of ATP and 5-phosphoribose 1-diphosphate to form N'-(5'-phosphoribosyl)-ATP (PR-ATP). Has a crucial role in the pathway because the rate of histidine biosynthesis seems to be controlled primarily by regulation of HisG enzymatic activity. The sequence is that of ATP phosphoribosyltransferase from Prochlorococcus marinus (strain NATL1A).